Consider the following 570-residue polypeptide: Ribosome-inactivating protein SNAIf (570 aa).

The first 28 residues, 1–28, serve as a signal peptide directing secretion; it reads MRVVTKLLYLVVLAICGLGIHGALTHTR. 3 N-linked (GlcNAc...) asparagine glycosylation sites follow: N40, N62, and N140. E199 is a catalytic residue. Residue N232 is glycosylated (N-linked (GlcNAc...) asparagine). Intrachain disulfides connect C284/C316, C332/C351, and C373/C385. 2 Ricin B-type lectin domains span residues 319–439 and 441–566; these read VEVT…WTVG and VEPL…WITT. The 1-alpha repeat unit spans residues 329 to 369; sequence DGLCVDVRDGHYIDGNTVQLGPCGNECNQLWTFRTDGTIRW. The stretch at 370–405 is one 1-beta repeat; sequence LGKCLTTSSSVMIYDCNTVPPEATKWVVSTDGTITN. A 1-gamma repeat occupies 408–440; it reads SGLVLTAPQAAEGTALSLENNIHAARQGWTVGD. A 2-alpha repeat occupies 452–489; sequence KQMCLTENGENNFVWLEDCVLNRVEQEWALYGDGTIRV. An intrachain disulfide couples C455 to C470. N492 is a glycosylation site (N-linked (GlcNAc...) asparagine). One copy of the 2-beta repeat lies at 493–531; it reads RSLCVTSEDHEPSDLIVILKCEGSGNQRWVFNTNGTISN. C496 and C513 form a disulfide bridge. N-linked (GlcNAc...) asparagine glycosylation is found at N526 and N544. The 2-gamma repeat unit spans residues 534 to 567; that stretch reads AKLVMDVAQSNVSLRKIILYPPTGNPNQQWITTT.

The protein belongs to the ribosome-inactivating protein family. Type 2 RIP subfamily. As to quaternary structure, tetramer of four pairs of disulfide bound A-B chains. In terms of processing, the precursor is processed in two chains, A and B, that are linked by a disulfide bond. A small truncated form corresponding roughly to the second ricin B-type lectin domain of the B chain, TrSNAIf, can also be produced. N-glycosylated. Expressed in fruits.

The catalysed reaction is Endohydrolysis of the N-glycosidic bond at one specific adenosine on the 28S rRNA.. In terms of biological role, neu5Ac(alpha2-6)Gal/GalNAc specific agglutinin. Behaves as a type-2 ribosome-inactivating protein. Strongly inhibits mammalian but not plant ribosomes. The A chain is responsible for inhibiting protein synthesis through the catalytic inactivation of 60S ribosomal subunits by removing adenine from position 4,324 of 28S rRNA. The B chain binds to cell receptors and probably facilitates the entry into the cell of the A chain; B chains are also responsible for cell agglutination (lectin activity). Involved in plant defense against insects. Its function is as follows. Binds Neu5Ac(alpha2-6)Gal/GalNAc but has no clear agglutination activity. In Sambucus nigra (European elder), this protein is Ribosome-inactivating protein SNAIf.